Consider the following 222-residue polypeptide: Cytolethal distending toxin subunit A (222 aa).

The first 15 residues, 1–15 (MKKFLPGLLLMGLVA), serve as a signal peptide directing secretion. The N-palmitoyl cysteine moiety is linked to residue Cys-16. Cys-16 is lipidated: S-diacylglycerol cysteine. Residues 22–44 (MSDYSQPESQSDLAPKSSTTQFQ) form a disordered region. The mediates binding to target cells stretch occupies residues 90–101 (WALAKRNWLWAY). The region spanning 122–211 (HREYFRFVNQ…EPLRDQTWYL (90 aa)) is the Ricin B-type lectin domain.

Heterotrimer of 3 subunits, CdtA, CdtB and CdtC. May form higher oligomers.

It localises to the cell outer membrane. Its function is as follows. CDTs are cytotoxins which induce host cell distension, growth arrest in G2/M phase, nucleus swelling, and chromatin fragmentation in HeLa cells. This is Cytolethal distending toxin subunit A (cdtA) from Aggregatibacter actinomycetemcomitans (Actinobacillus actinomycetemcomitans).